A 179-amino-acid chain; its full sequence is DELTA-miturgitoxin-Cp2a (179 aa).

The N-terminal stretch at 1–20 is a signal peptide; the sequence is MKFSLFFGVLFLAILHSCLS. Residues 21 to 47 constitute a propeptide that is removed on maturation; that stretch reads ESEKDLTDEDHFRSSDSFLSEIQEESR. Residues 44–47 carry the Processing quadruplet motif motif; the sequence is EESR. Intrachain disulfides connect Cys-51-Cys-66, Cys-58-Cys-75, Cys-65-Cys-88, Cys-77-Cys-86, Cys-115-Cys-130, Cys-122-Cys-139, Cys-129-Cys-158, and Cys-141-Cys-156. A Valine amide modification is found at Val-178.

This sequence belongs to the spider toxin CSTX family. Double-CSTX subfamily. Cleavage of the propeptide depends on the processing quadruplet motif (XXXR, with at least one of X being E). As to expression, expressed by the venom gland.

The protein localises to the secreted. Functionally, spider venom toxin that exhibits cytolytic activity by forming an alpha-helix across the membrane. Lethal to insect larvae. In Cheiracanthium punctorium (Yellow sac spider), this protein is DELTA-miturgitoxin-Cp2a.